We begin with the raw amino-acid sequence, 65 residues long: MIVPVRCFTCGKVIGDKYYEFKARVEKGEDPEKVLDDLGVERYCCRRTLLSHVELIDQVMVYKVY.

4 residues coordinate Zn(2+): cysteine 7, cysteine 10, cysteine 44, and cysteine 45.

It belongs to the archaeal Rpo10/eukaryotic RPB10 RNA polymerase subunit family. In terms of assembly, part of the RNA polymerase complex. Zn(2+) is required as a cofactor.

It localises to the cytoplasm. The catalysed reaction is RNA(n) + a ribonucleoside 5'-triphosphate = RNA(n+1) + diphosphate. DNA-dependent RNA polymerase (RNAP) catalyzes the transcription of DNA into RNA using the four ribonucleoside triphosphates as substrates. The protein is DNA-directed RNA polymerase subunit Rpo10 of Thermococcus onnurineus (strain NA1).